Reading from the N-terminus, the 150-residue chain is Globin-3 (150 aa).

The region spanning 11–150 (PLSAAEKTKI…MICILLRSAY (140 aa)) is the Globin domain. His74 and His106 together coordinate heme b.

This sequence belongs to the globin family. In terms of assembly, monomer.

The protein is Globin-3 of Petromyzon marinus (Sea lamprey).